The chain runs to 143 residues: Holo-[acyl-carrier-protein] synthase (143 aa).

Residues Asp8 and Glu62 each coordinate Mg(2+).

The protein belongs to the P-Pant transferase superfamily. AcpS family. Mg(2+) is required as a cofactor.

Its subcellular location is the cytoplasm. The catalysed reaction is apo-[ACP] + CoA = holo-[ACP] + adenosine 3',5'-bisphosphate + H(+). In terms of biological role, transfers the 4'-phosphopantetheine moiety from coenzyme A to a Ser of acyl-carrier-protein. This Cupriavidus metallidurans (strain ATCC 43123 / DSM 2839 / NBRC 102507 / CH34) (Ralstonia metallidurans) protein is Holo-[acyl-carrier-protein] synthase.